A 261-amino-acid polypeptide reads, in one-letter code: 1-(5-phosphoribosyl)-5-[(5-phosphoribosylamino)methylideneamino] imidazole-4-carboxamide isomerase (261 aa).

Catalysis depends on aspartate 15, which acts as the Proton acceptor. Residue aspartate 136 is the Proton donor of the active site.

The protein belongs to the HisA/HisF family.

It localises to the cytoplasm. It catalyses the reaction 1-(5-phospho-beta-D-ribosyl)-5-[(5-phospho-beta-D-ribosylamino)methylideneamino]imidazole-4-carboxamide = 5-[(5-phospho-1-deoxy-D-ribulos-1-ylimino)methylamino]-1-(5-phospho-beta-D-ribosyl)imidazole-4-carboxamide. Its pathway is amino-acid biosynthesis; L-histidine biosynthesis; L-histidine from 5-phospho-alpha-D-ribose 1-diphosphate: step 4/9. In Synechococcus sp. (strain JA-3-3Ab) (Cyanobacteria bacterium Yellowstone A-Prime), this protein is 1-(5-phosphoribosyl)-5-[(5-phosphoribosylamino)methylideneamino] imidazole-4-carboxamide isomerase.